Consider the following 427-residue polypeptide: Serine--tRNA ligase (427 aa).

231–233 contacts L-serine; it reads TAE. An ATP-binding site is contributed by 262–264; the sequence is RSE. Glu285 contributes to the L-serine binding site. 349–352 serves as a coordination point for ATP; sequence EISS. Position 385 (Ser385) interacts with L-serine.

The protein belongs to the class-II aminoacyl-tRNA synthetase family. Type-1 seryl-tRNA synthetase subfamily. Homodimer. The tRNA molecule binds across the dimer.

The protein localises to the cytoplasm. It carries out the reaction tRNA(Ser) + L-serine + ATP = L-seryl-tRNA(Ser) + AMP + diphosphate + H(+). It catalyses the reaction tRNA(Sec) + L-serine + ATP = L-seryl-tRNA(Sec) + AMP + diphosphate + H(+). It participates in aminoacyl-tRNA biosynthesis; selenocysteinyl-tRNA(Sec) biosynthesis; L-seryl-tRNA(Sec) from L-serine and tRNA(Sec): step 1/1. Functionally, catalyzes the attachment of serine to tRNA(Ser). Is also able to aminoacylate tRNA(Sec) with serine, to form the misacylated tRNA L-seryl-tRNA(Sec), which will be further converted into selenocysteinyl-tRNA(Sec). The sequence is that of Serine--tRNA ligase from Rhizobium etli (strain CIAT 652).